The sequence spans 745 residues: Elongation factor G, mitochondrial (745 aa).

One can recognise a tr-type G domain in the interval 40-317 (ERIRNIGISA…AVLDYLPNPG (278 aa)). GTP contacts are provided by residues 49 to 56 (AHIDSGKT), 116 to 120 (DTPGH), and 170 to 173 (NKLD).

The protein belongs to the TRAFAC class translation factor GTPase superfamily. Classic translation factor GTPase family. EF-G/EF-2 subfamily.

It is found in the mitochondrion. It functions in the pathway protein biosynthesis; polypeptide chain elongation. In terms of biological role, mitochondrial GTPase that catalyzes the GTP-dependent ribosomal translocation step during translation elongation. During this step, the ribosome changes from the pre-translocational (PRE) to the post-translocational (POST) state as the newly formed A-site-bound peptidyl-tRNA and P-site-bound deacylated tRNA move to the P and E sites, respectively. Catalyzes the coordinated movement of the two tRNA molecules, the mRNA and conformational changes in the ribosome. Essential during development as it acts as a retrograde signal from mitochondria to the nucleus to slow down cell proliferation if mitochondrial energy output is low. This Drosophila sechellia (Fruit fly) protein is Elongation factor G, mitochondrial.